A 118-amino-acid chain; its full sequence is MQKELLEVFDNRFPDRDYTIEIVNPEFTSVCPITGLPDFGTITIRYIPDKVCVELKSLKYYYLEFRNAGIFYENVTNTILDHLVDLLKPRTLTVTTAWKARGGITETVTVSYSAGQDE.

Residue cysteine 31 is the Thioimide intermediate of the active site. Aspartate 38 functions as the Proton donor in the catalytic mechanism. Residues 53 to 55 (VEL) and 72 to 73 (YE) contribute to the substrate site.

This sequence belongs to the GTP cyclohydrolase I family. QueF type 1 subfamily.

The protein localises to the cytoplasm. The enzyme catalyses 7-aminomethyl-7-carbaguanine + 2 NADP(+) = 7-cyano-7-deazaguanine + 2 NADPH + 3 H(+). Its pathway is tRNA modification; tRNA-queuosine biosynthesis. Functionally, catalyzes the NADPH-dependent reduction of 7-cyano-7-deazaguanine (preQ0) to 7-aminomethyl-7-deazaguanine (preQ1). The sequence is that of NADPH-dependent 7-cyano-7-deazaguanine reductase from Chlorobium phaeobacteroides (strain BS1).